We begin with the raw amino-acid sequence, 447 residues long: UMP-CMP kinase 2, mitochondrial (447 aa).

The N-terminal 73 residues, 1–73 (MALISRPRAP…ELLGPPGRSY (73 aa)), are a transit peptide targeting the mitochondrion. 259–266 (GLDATGKT) serves as a coordination point for ATP. Residues 380-412 (EERVRRLQGRGQEKTKEEAELEANNVFRQKVEM) adopt a coiled-coil conformation.

The protein belongs to the thymidylate kinase family. In terms of tissue distribution, strongly expressed in the brain.

The protein localises to the mitochondrion. It catalyses the reaction CMP + ATP = CDP + ADP. It carries out the reaction dCMP + ATP = dCDP + ADP. The catalysed reaction is a 2'-deoxyribonucleoside 5'-diphosphate + ATP = a 2'-deoxyribonucleoside 5'-triphosphate + ADP. The enzyme catalyses a ribonucleoside 5'-diphosphate + ATP = a ribonucleoside 5'-triphosphate + ADP. Its function is as follows. Mitochondrial nucleotide monophosphate kinase needed for salvage dNTP synthesis that mediates immunomodulatory and antiviral activities through IFN-dependent and IFN-independent pathways. Restricts the replication of multiple viruses including flaviviruses or coronaviruses. Together with viperin/RSAD2 and ddhCTP, suppresses the replication of several coronaviruses through inhibition of the viral RNA-dependent RNA polymerase activities. Concerning flaviviruses, restricts RNA translation when localized to the mitochondria independently of its kinase activity. Is able to phosphorylate dUMP, dCMP, CMP, UMP and monophosphates of the pyrimidine nucleoside analogs ddC, dFdC, araC, BVDU and FdUrd with ATP as phosphate donor. Efficacy is highest for dUMP followed by dCMP while CMP and UMP are poor substrates. Controls therefore mitochondrial DNA synthesis by supplying required deoxyribonucleotides. CMPK2-dependent mitochondrial DNA synthesis is necessary for the production of oxidized mitochondrial DNA fragments after exposure to NLRP3 activators. In turn, cytosolic oxidized mtDNA associates with the NLRP3 inflammasome complex and is required for its activation. In Mus musculus (Mouse), this protein is UMP-CMP kinase 2, mitochondrial (Cmpk2).